The following is a 350-amino-acid chain: Serpentine receptor class beta-12 (350 aa).

Topologically, residues 1–21 (MSEANLTECELAYQLTYHPFY) are extracellular. The N-linked (GlcNAc...) asparagine glycan is linked to Asn5. Residues 22-42 (MIAQFWSFFVSLLAMPSLIFF) form a helical membrane-spanning segment. Over 43–57 (MVEKVFKLPFHGNLK) the chain is Cytoplasmic. A helical membrane pass occupies residues 58–78 (FLLVSYFIGTFLFASIICFTF). Topologically, residues 79 to 103 (GYHFFVPFFVTSNCDLIINATLFKY) are extracellular. A glycan (N-linked (GlcNAc...) asparagine) is linked at Asn97. The helical transmembrane segment at 104 to 124 (GHMIALIFMTIPMILPTAFTV) threads the bilayer. At 125 to 141 (ERFVALKMAHSYEHVRT) the chain is on the cytoplasmic side. A helical membrane pass occupies residues 142–162 (LLGPVLVLVVIAIDSMFLYDI). Over 163-189 (YGQEKFDKPFINFILVPATSALQFNSF) the chain is Extracellular. A helical membrane pass occupies residues 190-210 (LWYMLYLKITNFICNLILLFI). Topologically, residues 211–243 (HKILHQSSRYRRKNVSLSVKYEMQEISQSSRFT) are cytoplasmic. A helical membrane pass occupies residues 244–264 (LIVTFTHLLFFGWYVSTILLI). Residues 265–282 (RTVGPDFFRGFINYTVMR) lie on the Extracellular side of the membrane. N-linked (GlcNAc...) asparagine glycosylation is present at Asn277. A helical membrane pass occupies residues 283–303 (GVYCATPTYNLVIVFIGFKAL). Topologically, residues 304–350 (NHLNFKRNNKVQSTIQIKSTGQEGAENYDNAISNYWDSVYTMNKSKL) are cytoplasmic.

Belongs to the nematode receptor-like protein srb family. In terms of tissue distribution, expressed throughout the head.

The protein resides in the cell membrane. It localises to the perikaryon. Its subcellular location is the cell projection. It is found in the dendrite. Functionally, G-protein coupled receptor. Plays a role in the navigational capacity of sperm and promotes the targeting of sperm derived from males to the fertilization site in the uterus of hermaphrodites. This is Serpentine receptor class beta-12 from Caenorhabditis elegans.